The primary structure comprises 133 residues: Single-stranded DNA-binding protein 2 (133 aa).

The region spanning 1 to 103 (MNKTILIGRL…VVAEEVKFLE (103 aa)) is the SSB domain.

Homotetramer.

The sequence is that of Single-stranded DNA-binding protein 2 (ssb2) from Clostridium acetobutylicum (strain ATCC 824 / DSM 792 / JCM 1419 / IAM 19013 / LMG 5710 / NBRC 13948 / NRRL B-527 / VKM B-1787 / 2291 / W).